Here is a 278-residue protein sequence, read N- to C-terminus: 4-hydroxy-tetrahydrodipicolinate reductase (278 aa).

NAD(+)-binding positions include 13–18 (GAAGKM) and 111–113 (GTT). Catalysis depends on H167, which acts as the Proton donor/acceptor. A (S)-2,3,4,5-tetrahydrodipicolinate-binding site is contributed by H168. The Proton donor role is filled by K171. A (S)-2,3,4,5-tetrahydrodipicolinate-binding site is contributed by 177-178 (GT).

The protein belongs to the DapB family.

The protein localises to the cytoplasm. The enzyme catalyses (S)-2,3,4,5-tetrahydrodipicolinate + NAD(+) + H2O = (2S,4S)-4-hydroxy-2,3,4,5-tetrahydrodipicolinate + NADH + H(+). It catalyses the reaction (S)-2,3,4,5-tetrahydrodipicolinate + NADP(+) + H2O = (2S,4S)-4-hydroxy-2,3,4,5-tetrahydrodipicolinate + NADPH + H(+). It functions in the pathway amino-acid biosynthesis; L-lysine biosynthesis via DAP pathway; (S)-tetrahydrodipicolinate from L-aspartate: step 4/4. Functionally, catalyzes the conversion of 4-hydroxy-tetrahydrodipicolinate (HTPA) to tetrahydrodipicolinate. In Nostoc punctiforme (strain ATCC 29133 / PCC 73102), this protein is 4-hydroxy-tetrahydrodipicolinate reductase.